A 79-amino-acid polypeptide reads, in one-letter code: Large ribosomal subunit protein bL31 (79 aa).

This sequence belongs to the bacterial ribosomal protein bL31 family. Type A subfamily. In terms of assembly, part of the 50S ribosomal subunit.

In terms of biological role, binds the 23S rRNA. The chain is Large ribosomal subunit protein bL31 from Synechococcus sp. (strain CC9902).